The sequence spans 524 residues: Na(+)/H(+) antiporter NhaB (524 aa).

9 helical membrane passes run 13–33, 98–118, 140–160, 239–259, 304–324, 325–345, 358–378, 448–468, and 479–499; these read FLGN…IINP, LLLV…LFVF, AFLS…SVSV, FFIR…LVCL, AIIG…VGLV, GLSV…HSLG, LTVF…TPII, ATPN…APLI, and ALPY…FLLV.

The protein belongs to the NhaB Na(+)/H(+) (TC 2.A.34) antiporter family.

The protein localises to the cell inner membrane. The catalysed reaction is 2 Na(+)(in) + 3 H(+)(out) = 2 Na(+)(out) + 3 H(+)(in). Its function is as follows. Na(+)/H(+) antiporter that extrudes sodium in exchange for external protons. The protein is Na(+)/H(+) antiporter NhaB of Yersinia pseudotuberculosis serotype O:3 (strain YPIII).